The chain runs to 381 residues: Heme A synthase (381 aa).

Residues 1–23 form a disordered region; the sequence is MARRPVFQEVTETTPPGTTPSGG. A compositionally biased stretch (low complexity) spans 11–23; sequence TETTPPGTTPSGG. 8 consecutive transmembrane segments (helical) span residues 34 to 54, 120 to 140, 151 to 171, 185 to 205, 228 to 248, 285 to 305, 319 to 339, and 342 to 362; these read GAIRLWLVVLFVMVAAMIALG, RLLGRLVGLVWAAGFVFFLAT, LLLLGALGGAQGAIGWWMVHS, LATHLGLAFAILGLIAWYVLA, TTGLMHLAFVQILLGALVAGI, LVQFIHRMTGYLLAVFAVVVF, AYVAMLVALAVQVALGIMNVL, and SPLPLALAHQIGAVALFTLIL. His290 contacts heme. Residue His350 coordinates heme.

Belongs to the COX15/CtaA family. Type 2 subfamily. As to quaternary structure, interacts with CtaB. Requires heme b as cofactor.

Its subcellular location is the cell membrane. It carries out the reaction Fe(II)-heme o + 2 A + H2O = Fe(II)-heme a + 2 AH2. It participates in porphyrin-containing compound metabolism; heme A biosynthesis; heme A from heme O: step 1/1. Functionally, catalyzes the conversion of heme O to heme A by two successive hydroxylations of the methyl group at C8. The first hydroxylation forms heme I, the second hydroxylation results in an unstable dihydroxymethyl group, which spontaneously dehydrates, resulting in the formyl group of heme A. This is Heme A synthase from Paracoccus denitrificans (strain Pd 1222).